Reading from the N-terminus, the 305-residue chain is Undecaprenyl-diphosphatase (305 aa).

The next 8 membrane-spanning stretches (helical) occupy residues 18 to 38, 55 to 75, 103 to 123, 130 to 150, 187 to 207, 225 to 245, 246 to 266, and 284 to 304; these read GVTE…PALV, YLAF…VFFW, WLIV…EQLF, PVPA…GEVL, GVLI…RSGI, FSFL…IPEL, FGPL…ASFV, and LTPF…WLAL.

Belongs to the UppP family.

The protein resides in the cell membrane. It catalyses the reaction di-trans,octa-cis-undecaprenyl diphosphate + H2O = di-trans,octa-cis-undecaprenyl phosphate + phosphate + H(+). Its function is as follows. Catalyzes the dephosphorylation of undecaprenyl diphosphate (UPP). Confers resistance to bacitracin. This is Undecaprenyl-diphosphatase from Mycobacterium avium (strain 104).